A 227-amino-acid chain; its full sequence is MKFAVIVFPGSNCDADMYHAVKDALGEEVDYLWHTETSVEGYDAILLPGGFSYGDYLRSGSIARFSPIMEDVIRAANEGVPVLGVCNGFQVLLEAGLLPGAMLRNEKLTFICKPVELEVQNNDTFFTSEYEQGETITIPVAHGEGNYYCDDETLKQLEANNQVVFRYTDRVNGSRNHIAGIVNKAGNVLGMMPHPERAVEQLVGGEDGLRLFKSILRNWRESHVVTP.

Residues 3-225 form the Glutamine amidotransferase type-1 domain; that stretch reads FAVIVFPGSN…LRNWRESHVV (223 aa). Catalysis depends on Cys-86, which acts as the Nucleophile. Residues His-194 and Glu-196 contribute to the active site.

In terms of assembly, part of the FGAM synthase complex composed of 1 PurL, 1 PurQ and 2 PurS subunits.

Its subcellular location is the cytoplasm. It carries out the reaction N(2)-formyl-N(1)-(5-phospho-beta-D-ribosyl)glycinamide + L-glutamine + ATP + H2O = 2-formamido-N(1)-(5-O-phospho-beta-D-ribosyl)acetamidine + L-glutamate + ADP + phosphate + H(+). It catalyses the reaction L-glutamine + H2O = L-glutamate + NH4(+). Its pathway is purine metabolism; IMP biosynthesis via de novo pathway; 5-amino-1-(5-phospho-D-ribosyl)imidazole from N(2)-formyl-N(1)-(5-phospho-D-ribosyl)glycinamide: step 1/2. Its function is as follows. Part of the phosphoribosylformylglycinamidine synthase complex involved in the purines biosynthetic pathway. Catalyzes the ATP-dependent conversion of formylglycinamide ribonucleotide (FGAR) and glutamine to yield formylglycinamidine ribonucleotide (FGAM) and glutamate. The FGAM synthase complex is composed of three subunits. PurQ produces an ammonia molecule by converting glutamine to glutamate. PurL transfers the ammonia molecule to FGAR to form FGAM in an ATP-dependent manner. PurS interacts with PurQ and PurL and is thought to assist in the transfer of the ammonia molecule from PurQ to PurL. In Halalkalibacterium halodurans (strain ATCC BAA-125 / DSM 18197 / FERM 7344 / JCM 9153 / C-125) (Bacillus halodurans), this protein is Phosphoribosylformylglycinamidine synthase subunit PurQ.